A 337-amino-acid chain; its full sequence is MGFTVALIQGDGIGPEIVSKSKRILAKINELYSLPIEYIEVEAGDRALARYGEALPKDSLKIIDKADIILKGPVGESAADVVVKLRQIYDMYANIRPAKSIPGIDTKYGNVDILIVRENTEDLYKGFEHIVSDGVAVGMKIITRFASERIAKVGLNFALRRRKKVTCVHKANVMRITDGLFAEACRSVLKGKVEYSEMYVDAAAANLVRNPQMFDVIVTENVYGDILSDEASQIAGSLGIAPSANIGDKKALFEPVHGAAFDIAGKNIGNPTAFLLSVSMMYERMYELSNDDRYIKASRALENAIYLVYKERKALTPDVGGNATTDDLINEIYNKLG.

Residues R86, R96, R117, and D201 each contribute to the substrate site. The Mg(2+) site is built by D201, D225, and D229. Position 258–270 (258–270) interacts with NAD(+); sequence GAAFDIAGKNIGN.

The protein belongs to the isocitrate and isopropylmalate dehydrogenases family. Homotetramer. Mg(2+) serves as cofactor. The cofactor is Mn(2+).

It localises to the cytoplasm. The catalysed reaction is (2R,3S)-3-isopropylmalate + NAD(+) = 4-methyl-2-oxopentanoate + CO2 + NADH. The protein operates within amino-acid biosynthesis; L-leucine biosynthesis; L-leucine from 3-methyl-2-oxobutanoate: step 3/4. Its function is as follows. Catalyzes the oxidation of 3-carboxy-2-hydroxy-4-methylpentanoate (3-isopropylmalate) to 3-carboxy-4-methyl-2-oxopentanoate. The product decarboxylates to 4-methyl-2 oxopentanoate. The polypeptide is 3-isopropylmalate dehydrogenase (leuB) (Sulfurisphaera tokodaii (strain DSM 16993 / JCM 10545 / NBRC 100140 / 7) (Sulfolobus tokodaii)).